Here is a 274-residue protein sequence, read N- to C-terminus: 2-dehydro-3-deoxyphosphooctonate aldolase (274 aa).

The protein belongs to the KdsA family.

It is found in the cytoplasm. It carries out the reaction D-arabinose 5-phosphate + phosphoenolpyruvate + H2O = 3-deoxy-alpha-D-manno-2-octulosonate-8-phosphate + phosphate. It functions in the pathway carbohydrate biosynthesis; 3-deoxy-D-manno-octulosonate biosynthesis; 3-deoxy-D-manno-octulosonate from D-ribulose 5-phosphate: step 2/3. The protein operates within bacterial outer membrane biogenesis; lipopolysaccharide biosynthesis. In Legionella pneumophila (strain Corby), this protein is 2-dehydro-3-deoxyphosphooctonate aldolase.